The chain runs to 157 residues: SsrA-binding protein (157 aa).

This sequence belongs to the SmpB family.

The protein resides in the cytoplasm. Functionally, required for rescue of stalled ribosomes mediated by trans-translation. Binds to transfer-messenger RNA (tmRNA), required for stable association of tmRNA with ribosomes. tmRNA and SmpB together mimic tRNA shape, replacing the anticodon stem-loop with SmpB. tmRNA is encoded by the ssrA gene; the 2 termini fold to resemble tRNA(Ala) and it encodes a 'tag peptide', a short internal open reading frame. During trans-translation Ala-aminoacylated tmRNA acts like a tRNA, entering the A-site of stalled ribosomes, displacing the stalled mRNA. The ribosome then switches to translate the ORF on the tmRNA; the nascent peptide is terminated with the 'tag peptide' encoded by the tmRNA and targeted for degradation. The ribosome is freed to recommence translation, which seems to be the essential function of trans-translation. This is SsrA-binding protein from Bacillus licheniformis (strain ATCC 14580 / DSM 13 / JCM 2505 / CCUG 7422 / NBRC 12200 / NCIMB 9375 / NCTC 10341 / NRRL NRS-1264 / Gibson 46).